The primary structure comprises 498 residues: NAC domain-containing protein 75 (498 aa).

Residues 48 to 215 (LPAGVKFDPT…ELVVSKIFYQ (168 aa)) form the NAC domain. Residues 166–221 (KGCKKILVLYTNFGKNRKPEKTNWVMHQYHLGTHEEEKEGELVVSKIFYQTQPRQC) mediate DNA binding. Disordered stretches follow at residues 225–278 (SSTS…PNRS), 338–374 (VMAE…QRHH), 423–443 (QQQL…GGRS), and 457–498 (STTH…DHHG). Residues 233 to 248 (IGGGGGEASSGGGGGE) are compositionally biased toward gly residues. Low complexity predominate over residues 256 to 266 (GTTSGGSCSSS). Over residues 356-374 (HMAHDHHHHHHQQQQQRHH) the composition is skewed to basic residues. Residues 466 to 475 (GSSSMGNQQE) show a composition bias toward polar residues.

In terms of tissue distribution, expressed in the vascular cylinder of roots. Expressed in the differentiation zone of the root stele.

It localises to the nucleus. Its function is as follows. Transcription activator involved in xylem formation. Promotes the expression of the secondary wall-associated transcription factor MYB46. Functions upstream of NAC030/VND7, a master switch of xylem vessel differentiation. Acts as a upstream regulator of NAC101/VND6 and LBD30/ASL19. This chain is NAC domain-containing protein 75, found in Arabidopsis thaliana (Mouse-ear cress).